The sequence spans 286 residues: Nucleotide-binding protein HCH_05324 (286 aa).

8–15 (GRSGSGKS) contacts ATP. GTP is bound at residue 60–63 (DARN).

The protein belongs to the RapZ-like family.

Displays ATPase and GTPase activities. In Hahella chejuensis (strain KCTC 2396), this protein is Nucleotide-binding protein HCH_05324.